We begin with the raw amino-acid sequence, 385 residues long: Outer membrane protein assembly factor BamB (385 aa).

The signal sequence occupies residues 1 to 20 (MRKVLKKAALCTFGFSMLFG). Residue C21 is the site of N-palmitoyl cysteine attachment. C21 is lipidated: S-diacylglycerol cysteine.

The protein belongs to the BamB family. Part of the Bam complex.

It localises to the cell outer membrane. Part of the outer membrane protein assembly complex, which is involved in assembly and insertion of beta-barrel proteins into the outer membrane. The polypeptide is Outer membrane protein assembly factor BamB (Aliivibrio fischeri (strain ATCC 700601 / ES114) (Vibrio fischeri)).